A 453-amino-acid chain; its full sequence is Bifunctional protein GlmU (453 aa).

The tract at residues 1–226 (MTLDVVILAA…ALEVEGVNNR (226 aa)) is pyrophosphorylase. Residues 8 to 11 (LAAG), lysine 22, glutamine 73, 78 to 79 (GT), 99 to 101 (YGD), glycine 136, glutamate 151, asparagine 166, and asparagine 224 contribute to the UDP-N-acetyl-alpha-D-glucosamine site. Aspartate 101 provides a ligand contact to Mg(2+). Asparagine 224 serves as a coordination point for Mg(2+). The linker stretch occupies residues 227–247 (SQMAALERAYQRDRAERLLTE). The tract at residues 248–453 (GVALADPARF…AGWKRPRKSS (206 aa)) is N-acetyltransferase. UDP-N-acetyl-alpha-D-glucosamine-binding residues include arginine 330 and lysine 348. Histidine 360 (proton acceptor) is an active-site residue. UDP-N-acetyl-alpha-D-glucosamine-binding residues include tyrosine 363 and asparagine 374. Residues alanine 377, 383–384 (NY), serine 402, alanine 420, and arginine 437 contribute to the acetyl-CoA site.

In the N-terminal section; belongs to the N-acetylglucosamine-1-phosphate uridyltransferase family. It in the C-terminal section; belongs to the transferase hexapeptide repeat family. As to quaternary structure, homotrimer. Requires Mg(2+) as cofactor.

The protein resides in the cytoplasm. The enzyme catalyses alpha-D-glucosamine 1-phosphate + acetyl-CoA = N-acetyl-alpha-D-glucosamine 1-phosphate + CoA + H(+). The catalysed reaction is N-acetyl-alpha-D-glucosamine 1-phosphate + UTP + H(+) = UDP-N-acetyl-alpha-D-glucosamine + diphosphate. The protein operates within nucleotide-sugar biosynthesis; UDP-N-acetyl-alpha-D-glucosamine biosynthesis; N-acetyl-alpha-D-glucosamine 1-phosphate from alpha-D-glucosamine 6-phosphate (route II): step 2/2. It participates in nucleotide-sugar biosynthesis; UDP-N-acetyl-alpha-D-glucosamine biosynthesis; UDP-N-acetyl-alpha-D-glucosamine from N-acetyl-alpha-D-glucosamine 1-phosphate: step 1/1. Its pathway is bacterial outer membrane biogenesis; LPS lipid A biosynthesis. Functionally, catalyzes the last two sequential reactions in the de novo biosynthetic pathway for UDP-N-acetylglucosamine (UDP-GlcNAc). The C-terminal domain catalyzes the transfer of acetyl group from acetyl coenzyme A to glucosamine-1-phosphate (GlcN-1-P) to produce N-acetylglucosamine-1-phosphate (GlcNAc-1-P), which is converted into UDP-GlcNAc by the transfer of uridine 5-monophosphate (from uridine 5-triphosphate), a reaction catalyzed by the N-terminal domain. This chain is Bifunctional protein GlmU, found in Chromohalobacter salexigens (strain ATCC BAA-138 / DSM 3043 / CIP 106854 / NCIMB 13768 / 1H11).